A 293-amino-acid polypeptide reads, in one-letter code: MASTSRLENNKVCCYAHPESPLIEDYRAGDMICSECGLVVGDAFGGPENPLLSGGHLSTIIGPGTGSASFDAFGAPKYPNRRTMRSSDRSLISAFKEISSMADRINLPKTIVDRANTLFKQVHDGKNLKGRSNDAKASACLYIACRQEGVPRTFKEICAVSKISKKEIGRCFKLTLKALETSVDLITTADFMCRFCANLDLPNMVQRAATHIAKKAVEMDIVPGRSPISVAAAAIYMASQASEHKRSQKEIGDIAGVADVTIRQSYKLMYPHAAKLFPEDFKFTTPIDQLPQM.

The segment at 10-41 (NKVCCYAHPESPLIEDYRAGDMICSECGLVVG) adopts a TFIIB-type zinc-finger fold. Cys14, His17, Cys33, and Cys36 together coordinate Zn(2+). 2 tandem repeats follow at residues 101–177 (MADR…LTLK) and 195–271 (FCAN…LMYP).

Belongs to the TFIIB family. Associates with TFIID-IIA (DA complex) to form TFIID-IIA-IIB (DAB-complex) which is then recognized by polymerase II.

It localises to the nucleus. General factor that plays a major role in the activation of eukaryotic genes transcribed by RNA polymerase II. The chain is Transcription initiation factor IIB (TfIIB) from Drosophila virilis (Fruit fly).